Consider the following 881-residue polypeptide: EEF1AKMT4-ECE2 readthrough transcript protein (881 aa).

Positions 1-160 are methyltransferase-like region; the sequence is MASPRTPVSP…VHTVDQVLSE (160 aa). Residues 1–178 are Cytoplasmic-facing; the sequence is MASPRTPVSP…QLFGSHTQLE (178 aa). Residues Trp-26 and Tyr-30 each contribute to the S-adenosyl-L-methionine site. Tyr-39 is modified (phosphotyrosine). Residues Trp-41, Gly-66, 88–89, 113–114, and Lys-130 contribute to the S-adenosyl-L-methionine site; these read DY and DV. Position 174 is a phosphoserine (His-174). A helical; Signal-anchor for type II membrane protein transmembrane segment spans residues 179–199; it reads LVLAGLILVLAALLLGCLVAL. At 200–881 the chain is on the lumenal side; that stretch reads WVHRDPAHST…MNPGQLCEVW (682 aa). The 673-residue stretch at 209 to 881 folds into the Peptidase M13 domain; sequence TCVTEACIRV…MNPGQLCEVW (673 aa). 5 cysteine pairs are disulfide-bonded: Cys-210–Cys-215, Cys-233–Cys-866, Cys-241–Cys-826, Cys-297–Cys-546, and Cys-755–Cys-878. N-linked (GlcNAc...) asparagine glycans are attached at residues Asn-277, Asn-281, Asn-322, Asn-382, Asn-427, Asn-494, and Asn-650. Zn(2+) is bound at residue His-718. The active site involves Glu-719. His-722 contacts Zn(2+). Asn-743 and Asn-751 each carry an N-linked (GlcNAc...) asparagine glycan. Glu-778 is a binding site for Zn(2+). The Proton donor role is filled by Asp-782.

This sequence in the N-terminal section; belongs to the methyltransferase superfamily. It in the C-terminal section; belongs to the peptidase M13 family. Zn(2+) is required as a cofactor. In terms of tissue distribution, expressed at high levels in central nervous system. Expressed in adrenal glands, ovary and uterus, and at low levels in heart.

The protein resides in the golgi apparatus membrane. The protein localises to the cytoplasmic vesicle. It localises to the secretory vesicle membrane. The catalysed reaction is Hydrolysis of the 21-Trp-|-Val-22 bond in big endothelin to form endothelin 1.. With respect to regulation, inhibited by phosphoramidon. Functionally, converts big endothelin-1 to endothelin-1. May also have methyltransferase activity. May play a role in amyloid-beta processing. This is EEF1AKMT4-ECE2 readthrough transcript protein from Mus musculus (Mouse).